A 478-amino-acid chain; its full sequence is tRNA(Ile)-lysidine synthase (478 aa).

27 to 32 is an ATP binding site; it reads SGGSDS.

This sequence belongs to the tRNA(Ile)-lysidine synthase family.

It is found in the cytoplasm. The enzyme catalyses cytidine(34) in tRNA(Ile2) + L-lysine + ATP = lysidine(34) in tRNA(Ile2) + AMP + diphosphate + H(+). Its function is as follows. Ligates lysine onto the cytidine present at position 34 of the AUA codon-specific tRNA(Ile) that contains the anticodon CAU, in an ATP-dependent manner. Cytidine is converted to lysidine, thus changing the amino acid specificity of the tRNA from methionine to isoleucine. This chain is tRNA(Ile)-lysidine synthase, found in Rickettsia africae (strain ESF-5).